A 22-amino-acid chain; its full sequence is Pectinesterase (22 aa).

Asp6 (proton donor) is an active-site residue. Residues Arg19 and Trp21 each contribute to the substrate site.

It belongs to the pectinesterase family.

The protein localises to the secreted. It localises to the cell wall. The enzyme catalyses [(1-&gt;4)-alpha-D-galacturonosyl methyl ester](n) + n H2O = [(1-&gt;4)-alpha-D-galacturonosyl](n) + n methanol + n H(+). Its pathway is glycan metabolism; pectin degradation; 2-dehydro-3-deoxy-D-gluconate from pectin: step 1/5. This Capsicum chinense (Scotch bonnet) protein is Pectinesterase.